The chain runs to 203 residues: Large ribosomal subunit protein bL25 (203 aa).

This sequence belongs to the bacterial ribosomal protein bL25 family. CTC subfamily. Part of the 50S ribosomal subunit; part of the 5S rRNA/L5/L18/L25 subcomplex. Contacts the 5S rRNA. Binds to the 5S rRNA independently of L5 and L18.

In terms of biological role, this is one of the proteins that binds to the 5S RNA in the ribosome where it forms part of the central protuberance. This chain is Large ribosomal subunit protein bL25, found in Rickettsia conorii (strain ATCC VR-613 / Malish 7).